We begin with the raw amino-acid sequence, 147 residues long: Large ribosomal subunit protein uL15 (147 aa).

The interval 1-57 (MRLHDVKPQKGSKKRKKRVARGISAGQGASAGLGMRGQKSRSGSGTRPGFEGGQQPL) is disordered. Positions 10-20 (KGSKKRKKRVA) are enriched in basic residues.

It belongs to the universal ribosomal protein uL15 family. In terms of assembly, part of the 50S ribosomal subunit.

Functionally, binds to the 23S rRNA. The polypeptide is Large ribosomal subunit protein uL15 (Nostoc punctiforme (strain ATCC 29133 / PCC 73102)).